The sequence spans 182 residues: Organic solute transporter subunit beta (182 aa).

An N-terminal signal peptide occupies residues M1–G20. The Extracellular portion of the chain corresponds to K21 to N64. Residues N42 and N48 are each glycosylated (N-linked (GlcNAc...) asparagine). Residues W65 to A85 traverse the membrane as a helical segment. The Cytoplasmic segment spans residues Q86–V182.

It belongs to the OST-beta family. In terms of assembly, interacts with slc51a. The Ost-alpha/Ost-beta complex is a heterodimer composed of alpha (slc51a) and beta (slc51b) subunit; may induce the transport of slc51a from the endoplasmic reticulum to the plasma membrane. Expressed in liver.

It is found in the cell membrane. Its function is as follows. Essential component of the Ost-alpha/Ost-beta complex, a heterodimer that acts as the intestinal basolateral transporter responsible for bile acid export from enterocytes into portal blood. Efficiently transports the major species of bile acids. May modulate slc51a glycosylation, membrane trafficking and stability activities. Able to transport taurocholate, estrone sulfate, digoxin, and prostaglandin E(2), but not p-aminohippurate or S-dinitrophenyl glutathione. This is Organic solute transporter subunit beta (slc51b) from Leucoraja erinaceus (Little skate).